Here is a 192-residue protein sequence, read N- to C-terminus: Xanthine phosphoribosyltransferase (192 aa).

Positions 20 and 27 each coordinate xanthine. 128–132 (ANGQA) contributes to the 5-phospho-alpha-D-ribose 1-diphosphate binding site. K156 lines the xanthine pocket.

It belongs to the purine/pyrimidine phosphoribosyltransferase family. Xpt subfamily. Homodimer.

It localises to the cytoplasm. It carries out the reaction XMP + diphosphate = xanthine + 5-phospho-alpha-D-ribose 1-diphosphate. It participates in purine metabolism; XMP biosynthesis via salvage pathway; XMP from xanthine: step 1/1. In terms of biological role, converts the preformed base xanthine, a product of nucleic acid breakdown, to xanthosine 5'-monophosphate (XMP), so it can be reused for RNA or DNA synthesis. The protein is Xanthine phosphoribosyltransferase of Listeria monocytogenes serotype 4b (strain F2365).